The sequence spans 125 residues: MARVTVEDCIDKVHNRFDLILLAAQRARQISGGAELTLDRDRDKNPVVALREIADELITPVQLREALLNDLQQVHLDDDDVPDEVGSLSASAEALRLTAETPARNQTSSRRAAAAAAAAAAVDYD.

Belongs to the RNA polymerase subunit omega family. The RNAP catalytic core consists of 2 alpha, 1 beta, 1 beta' and 1 omega subunit. When a sigma factor is associated with the core the holoenzyme is formed, which can initiate transcription.

It catalyses the reaction RNA(n) + a ribonucleoside 5'-triphosphate = RNA(n+1) + diphosphate. Its function is as follows. Promotes RNA polymerase assembly. Latches the N- and C-terminal regions of the beta' subunit thereby facilitating its interaction with the beta and alpha subunits. This Zymomonas mobilis subsp. mobilis (strain ATCC 31821 / ZM4 / CP4) protein is DNA-directed RNA polymerase subunit omega.